Consider the following 2037-residue polypeptide: Protein SWOLLEN 1 (2037 aa).

11 disordered regions span residues 141 to 179 (VEPG…VKTD), 454 to 487 (REGG…NDRD), 504 to 531 (SVGY…TDKS), 567 to 637 (KTSS…KDAV), 686 to 705 (SLPI…DNTA), 837 to 893 (VGSP…SGGK), 1011 to 1045 (ATPE…PMIP), 1148 to 1197 (KHVQ…ESGP), 1729 to 1748 (SGET…KRPR), 1793 to 1812 (KSTR…TGLQ), and 1841 to 2037 (EAST…QSKK). Residues 147-157 (SHERSLSKEET) show a composition bias toward basic and acidic residues. Polar residues predominate over residues 158 to 176 (VNLQPNPSVDDTPGESSVV). The span at 454-466 (REGGVSKKSDNEG) shows a compositional bias: basic and acidic residues. A compositionally biased stretch (low complexity) spans 504-514 (SVGYVSGGSTS). Over residues 515-526 (ELAESESQSDSI) the composition is skewed to polar residues. The span at 841-852 (STSSLDKTAAKS) shows a compositional bias: low complexity. A compositionally biased stretch (basic residues) spans 853 to 865 (SKAKSERKPRRTS). Composition is skewed to polar residues over residues 1025–1041 (ETPS…SGTN) and 1151–1171 (QSGT…TSTV). The span at 1179–1189 (TRVKSRKRKKM) shows a compositional bias: basic residues. Over residues 1794-1805 (STREENKPDPLR) the composition is skewed to basic and acidic residues. 3 stretches are compositionally biased toward polar residues: residues 1874–1886 (KTIS…TISR), 1942–1964 (EEQT…STNK), and 2013–2023 (LQTSMMTSKIP). A compositionally biased stretch (basic residues) spans 2028-2037 (SKSHLSQSKK).

As to quaternary structure, interacts with importin alpha IMPA1 and IMPA2, required for nuclear-localized proteins import. As to expression, mainly expressed in seedlings, flower buds and stems, and, to a lower extent, in leaves and siliques.

It is found in the nucleus. In terms of biological role, under salt stress, appears to prevent the accumulation of reactive oxygen species (ROS) in roots and required for the maintenance of cell wall integrity (cellulose, pectin and lignin composition) by interacting with importin alpha (e.g. IMPA1 and IMPA2) and binding to the promoter of several ROS- and cell wall-related genes to regulate their expression. Necessary for cells organization in meristems and root elongation zones as well as for root elongation in high salinity, but not upon osmotic stress. The chain is Protein SWOLLEN 1 from Arabidopsis thaliana (Mouse-ear cress).